Reading from the N-terminus, the 1167-residue chain is MHTGEYSELLIGINGHMKKITLKLKNNLEEDQYSNCVKYGWIEKRCGKNQSFSSWKRMWFILKDSKLTYYIKEKNLKKRSSTIGSTQEFFKQQHGIDNNNCTNSNSNNNNNNSDLIHLSAPSLSSSTSSTISPISSSSSLTTTTTTTTTTTNANTNNGLSDSINHVYLEGELGKKKEGKGWKVRWMKLLEHSLVYYKSSKDKEPLGIVNLNECQDCEVNKESSNKFVVVHSSNRYYFKTNTKQELTQWVKSVKSRIPSINQTKMDLDQFQLKGVIEFNSIQQIAETFKFNSQPNCLTITTDEKAYYLSFDSNKDKLDWLNQLNLTINKFKGGFNSGGGSNNSSPSSLQSQQAKESGNGGSLSPNILGNFKSSIKPWRFSSSPSQGRVSIGGGGDRSSTQVKFVDNPLSKSSNKEEFDGGEYGSQILPRKSTIIGPNGGVKVSTSGAVELSPVLISSNNNNNNTISSSGNSIPTCLSDLINESSDNEDGDDLKMMIPESLKNEMMRRSAISSLKNFKLEIFIWSNHQEVFTFLFSDSVLVDQVKAFAFKKIPSLANLSVLDYRLGIDEDTLLEVEFLKFIYSHTMVELALKTCGIVKIGIFHHRKDRRVKEKLYSDKFYGHLLSQSPDGRKGNGVGIGGNGIPIEYSRSEPNLQSCLSSSPSTRETMVPSSPSSHQLITPPPSLKQYEQQLSSSSSSSSQQLQLQLQQQEQEQLLQEQPEAEQSQPEPQPQLEPESEIEIEELEQPIEELLNISTTPISIRSNSILSSSTSASSSPSSTPSLTPVIERQQKMSAAGWHSVNPSVTLNQRRQLISGCPGWNIEVSNPTSTFTSQGFKPKFDKQEHGFYRRYNFDGTSTVQSFLGVDMKMGPLAFSLAKDANDNYRGVLHTKHGAKTISEDSKNIVGILNLLSLSKKVKTKKVVSHLIGLLDPSIDAKLLNLASNQSELQKELLSFEERQTTSGFKFGMVYCRHGQVTDDEIFSNKQGSPEWDEFLSLIGDKIELVGWPHYSAGLDVKFNSTGTHSLYTDYHGNEVMFHVSTMLPFSTTDYQQIERKRQVGNDICVVIFNDGTLSYMPNTITSQFNHVIILVQYDKQNNGYKVSMACKDGVKSPFEPLSPNNLIKKSDIKDFILTKLINGELASLQAPVFASKITRTRESLLNYYISQFL.

PH domains are found at residues 35–140 (NCVK…SSSL) and 165–257 (HVYL…SRIP). The tract at residues 95–160 (GIDNNNCTNS…TNANTNNGLS (66 aa)) is disordered. Over residues 98–155 (NNNCTNSNSNNNNNNSDLIHLSAPSLSSSTSSTISPISSSSSLTTTTTTTTTTTNANT) the composition is skewed to low complexity. Disordered stretches follow at residues 335 to 361 (SGGG…GGSL), 376 to 400 (WRFS…STQV), and 645 to 734 (YSRS…LEPE). The span at 340–351 (NNSSPSSLQSQQ) shows a compositional bias: low complexity. A compositionally biased stretch (polar residues) spans 648 to 676 (SEPNLQSCLSSSPSTRETMVPSSPSSHQL). Positions 687-732 (EQQLSSSSSSSSQQLQLQLQQQEQEQLLQEQPEAEQSQPEPQPQLE) are enriched in low complexity. In terms of domain architecture, Rap-GAP spans 950–1162 (LLSFEERQTT…RTRESLLNYY (213 aa)).

This is PH and Rap-GAP domain-containing protein DDB_G0271806 from Dictyostelium discoideum (Social amoeba).